A 353-amino-acid polypeptide reads, in one-letter code: S-adenosylmethionine:tRNA ribosyltransferase-isomerase (353 aa).

The protein belongs to the QueA family. As to quaternary structure, monomer.

Its subcellular location is the cytoplasm. It carries out the reaction 7-aminomethyl-7-carbaguanosine(34) in tRNA + S-adenosyl-L-methionine = epoxyqueuosine(34) in tRNA + adenine + L-methionine + 2 H(+). The protein operates within tRNA modification; tRNA-queuosine biosynthesis. In terms of biological role, transfers and isomerizes the ribose moiety from AdoMet to the 7-aminomethyl group of 7-deazaguanine (preQ1-tRNA) to give epoxyqueuosine (oQ-tRNA). In Dinoroseobacter shibae (strain DSM 16493 / NCIMB 14021 / DFL 12), this protein is S-adenosylmethionine:tRNA ribosyltransferase-isomerase.